The primary structure comprises 668 residues: Exoribonuclease 2 (668 aa).

In terms of domain architecture, RNB spans 193–521 (RIEMTHVPFV…INHRMLKAVI (329 aa)). An S1 motif domain is found at 568–650 (QTCFTGEIFD…ENRSLVAKPT (83 aa)).

The protein belongs to the RNR ribonuclease family. RNase II subfamily.

The protein localises to the cytoplasm. It carries out the reaction Exonucleolytic cleavage in the 3'- to 5'-direction to yield nucleoside 5'-phosphates.. Involved in mRNA degradation. Hydrolyzes single-stranded polyribonucleotides processively in the 3' to 5' direction. This is Exoribonuclease 2 from Vibrio parahaemolyticus serotype O3:K6 (strain RIMD 2210633).